The following is a 246-amino-acid chain: tRNA (guanine-N(1)-)-methyltransferase (246 aa).

S-adenosyl-L-methionine-binding positions include Gly112 and 131–136 (IGDYVL).

The protein belongs to the RNA methyltransferase TrmD family. As to quaternary structure, homodimer.

It localises to the cytoplasm. The enzyme catalyses guanosine(37) in tRNA + S-adenosyl-L-methionine = N(1)-methylguanosine(37) in tRNA + S-adenosyl-L-homocysteine + H(+). In terms of biological role, specifically methylates guanosine-37 in various tRNAs. The sequence is that of tRNA (guanine-N(1)-)-methyltransferase from Thermosipho melanesiensis (strain DSM 12029 / CIP 104789 / BI429).